The sequence spans 437 residues: Anhydromevalonate phosphate decarboxylase (437 aa).

2 residues coordinate Mn(2+): N136 and E199. D247 functions as the Proton acceptor in the catalytic mechanism.

It belongs to the UbiD family. Requires prenylated FMN as cofactor. The cofactor is Mn(2+).

The enzyme catalyses (2E)-3-methyl-5-phosphooxypent-2-enoate + H(+) = isopentenyl phosphate + CO2. The protein operates within isoprenoid biosynthesis; isopentenyl diphosphate biosynthesis via mevalonate pathway. Functionally, catalyzes the conversion of trans-anhydromevalonate 5-phosphate (tAHMP) into isopentenyl phosphate. Involved in the archaeal mevalonate (MVA) pathway, which provides fundamental precursors for isoprenoid biosynthesis, such as isopentenyl diphosphate (IPP) and dimethylallyl diphosphate (DMAPP). The polypeptide is Anhydromevalonate phosphate decarboxylase (Aeropyrum pernix (strain ATCC 700893 / DSM 11879 / JCM 9820 / NBRC 100138 / K1)).